The chain runs to 556 residues: Probable zinc metalloprotease EGY2, chloroplastic (556 aa).

The transit peptide at Met1–Arg64 directs the protein to the chloroplast. Residues Val63–Gly133 form a disordered region. Transmembrane regions (helical) follow at residues Ala267–Leu287, Leu311–Val331, Gly336–Ile356, Ala374–Val394, Pro437–Gly457, Leu484–Phe504, and Leu527–Thr547.

It belongs to the peptidase M50B family.

It localises to the plastid. It is found in the chloroplast membrane. Functionally, probable membrane-associated metalloprotease that may be involved in chloroplast development. This chain is Probable zinc metalloprotease EGY2, chloroplastic (EGY2), found in Arabidopsis thaliana (Mouse-ear cress).